The sequence spans 345 residues: Selenide, water dikinase (345 aa).

Cys15 is an active-site residue. ATP is bound by residues Lys18 and 46 to 48; that span reads SKD. Asp49 provides a ligand contact to Mg(2+). ATP-binding positions include Asp66, Asp89, and 137–139; that span reads GHS. Asp89 contributes to the Mg(2+) binding site. Position 225 (Asp225) interacts with Mg(2+).

The protein belongs to the selenophosphate synthase 1 family. Class I subfamily. Homodimer. The cofactor is Mg(2+).

It carries out the reaction hydrogenselenide + ATP + H2O = selenophosphate + AMP + phosphate + 2 H(+). Synthesizes selenophosphate from selenide and ATP. This is Selenide, water dikinase from Aeromonas salmonicida (strain A449).